Here is a 289-residue protein sequence, read N- to C-terminus: tRNA pseudouridine synthase B (289 aa).

D38 (nucleophile) is an active-site residue.

Belongs to the pseudouridine synthase TruB family. Type 1 subfamily.

The catalysed reaction is uridine(55) in tRNA = pseudouridine(55) in tRNA. Responsible for synthesis of pseudouridine from uracil-55 in the psi GC loop of transfer RNAs. The protein is tRNA pseudouridine synthase B of Clostridium tetani (strain Massachusetts / E88).